An 83-amino-acid chain; its full sequence is Toxin AahP985 (83 aa).

The N-terminal stretch at 1 to 18 (MNYLVMISLALLIAGVDS) is a signal peptide. The 63-residue stretch at 20-82 (RDAYIAKNDN…VPIKLSGECH (63 aa)) folds into the LCN-type CS-alpha/beta domain. 4 disulfides stabilise this stretch: cysteine 30–cysteine 81, cysteine 34–cysteine 54, cysteine 40–cysteine 64, and cysteine 44–cysteine 66.

Belongs to the long (4 C-C) scorpion toxin superfamily. Sodium channel inhibitor family. Alpha subfamily. Expressed by the venom gland.

The protein resides in the secreted. In terms of biological role, binds voltage-independently at site-3 of sodium channels (Nav) and inhibits the inactivation of the activated channels, thereby blocking neuronal transmission. The sequence is that of Toxin AahP985 from Androctonus australis (Sahara scorpion).